Here is a 633-residue protein sequence, read N- to C-terminus: ATP-dependent RNA helicase mss116, mitochondrial (633 aa).

The N-terminal 32 residues, 1–32 (MKTGRTRPLRVFDILVPPWPPTVPHRIKLPRG), are a transit peptide targeting the mitochondrion. A Q motif motif is present at residues 38-66 (EFYSAITRNWNKLKGLKNCWQIWKDVQEI). The 179-residue stretch at 70–248 (IRKYQGESTV…TAEKLSNIQT (179 aa)) folds into the Helicase ATP-binding domain. 83 to 90 (PGNNDGAH) provides a ligand contact to ATP. Positions 195-198 (RPLE) match the DEAD box motif. Residues 262–429 (FLADVKRILQ…NVDLVIQVGL (168 aa)) enclose the Helicase C-terminal domain. A disordered region spans residues 567-633 (FNYATGNDLN…GGRGGKPRAA (67 aa)).

Belongs to the DEAD box helicase family. DDX18/HAS1 subfamily.

The protein resides in the mitochondrion matrix. The catalysed reaction is ATP + H2O = ADP + phosphate + H(+). Its function is as follows. ATP-dependent RNA helicase required for mitochondrial splicing of group I and II introns. Also required for efficient mitochondrial translation. The chain is ATP-dependent RNA helicase mss116, mitochondrial (mss116) from Aspergillus oryzae (strain ATCC 42149 / RIB 40) (Yellow koji mold).